An 862-amino-acid chain; its full sequence is Switch 2 (862 aa).

Disordered stretches follow at residues 13 to 43 and 58 to 95; these read PCGS…SSLS and KHES…DDER. Residues 16 to 27 are compositionally biased toward low complexity; the sequence is SFPSSSSLRVSS. The span at 58–84 shows a compositional bias: basic and acidic residues; sequence KHESKISKTQVEDFDHNEDDHKRNIKF. Over residues 85 to 95 the composition is skewed to acidic residues; it reads DEEEVDEDDER. One can recognise a Helicase ATP-binding domain in the interval 151–323; the sequence is YNLYKNNHGG…FNLFEWVAPG (173 aa). Residue 164-171 coordinates ATP; that stretch reads DDMGLGKT. The DEAH box signature appears at 274–277; that stretch reads DEAH. The stretch at 274 to 294 forms a coiled coil; that stretch reads DEAHRLKNEKSKLYEACLEIK. In terms of domain architecture, Helicase C-terminal spans 532–685; it reads ALEKLMASWI…VAGKMETRYF (154 aa). Polar residues predominate over residues 782–793; the sequence is TTSTSQRLNGDG. A disordered region spans residues 782-821; sequence TTSTSQRLNGDGNSADRKKKKRKGCSEEEDMSSSNREQKR.

The protein belongs to the SNF2/RAD54 helicase family.

Functionally, may be involved in early DNA damage response. Probable chromatin remodeling factor. The sequence is that of Switch 2 from Arabidopsis thaliana (Mouse-ear cress).